The chain runs to 146 residues: UPF0178 protein OB0454 (146 aa).

Belongs to the UPF0178 family.

The chain is UPF0178 protein OB0454 from Oceanobacillus iheyensis (strain DSM 14371 / CIP 107618 / JCM 11309 / KCTC 3954 / HTE831).